Consider the following 363-residue polypeptide: UDP-3-O-acylglucosamine N-acyltransferase (363 aa).

Catalysis depends on histidine 252, which acts as the Proton acceptor.

The protein belongs to the transferase hexapeptide repeat family. LpxD subfamily. As to quaternary structure, homotrimer.

It catalyses the reaction a UDP-3-O-[(3R)-3-hydroxyacyl]-alpha-D-glucosamine + a (3R)-hydroxyacyl-[ACP] = a UDP-2-N,3-O-bis[(3R)-3-hydroxyacyl]-alpha-D-glucosamine + holo-[ACP] + H(+). The protein operates within bacterial outer membrane biogenesis; LPS lipid A biosynthesis. Catalyzes the N-acylation of UDP-3-O-acylglucosamine using 3-hydroxyacyl-ACP as the acyl donor. Is involved in the biosynthesis of lipid A, a phosphorylated glycolipid that anchors the lipopolysaccharide to the outer membrane of the cell. This Cupriavidus taiwanensis (strain DSM 17343 / BCRC 17206 / CCUG 44338 / CIP 107171 / LMG 19424 / R1) (Ralstonia taiwanensis (strain LMG 19424)) protein is UDP-3-O-acylglucosamine N-acyltransferase.